The primary structure comprises 360 residues: NAD(P)H-quinone oxidoreductase subunit 1, chloroplastic (360 aa).

The next 9 membrane-spanning stretches (helical) occupy residues 27 to 47 (IWIFVPIFSLVLGIITGVLVI), 98 to 118 (FSIGPSIAVISILLSYSVIPF), 129 to 149 (IGIFLWIAISSIAPIGLLMSG), 165 to 185 (AAQSISYEIPLTLCVLSISLL), 203 to 223 (FWGWNLWRQPIGFIIFLISSL), 248 to 268 (YSGIKFGLFYVASYLNLLISS), 269 to 289 (LFVTVLYLGGWNISIPYISIL), 297 to 317 (IFGTTIGIFITLAKTYLFLFI), and 340 to 360 (FLLPISLGNLLLTTSFQLFSL).

This sequence belongs to the complex I subunit 1 family. In terms of assembly, NDH is composed of at least 16 different subunits, 5 of which are encoded in the nucleus.

The protein resides in the plastid. It localises to the chloroplast thylakoid membrane. It carries out the reaction a plastoquinone + NADH + (n+1) H(+)(in) = a plastoquinol + NAD(+) + n H(+)(out). The enzyme catalyses a plastoquinone + NADPH + (n+1) H(+)(in) = a plastoquinol + NADP(+) + n H(+)(out). Functionally, NDH shuttles electrons from NAD(P)H:plastoquinone, via FMN and iron-sulfur (Fe-S) centers, to quinones in the photosynthetic chain and possibly in a chloroplast respiratory chain. The immediate electron acceptor for the enzyme in this species is believed to be plastoquinone. Couples the redox reaction to proton translocation, and thus conserves the redox energy in a proton gradient. This is NAD(P)H-quinone oxidoreductase subunit 1, chloroplastic from Nasturtium officinale (Watercress).